Consider the following 218-residue polypeptide: FPNVQMLPLDLRELFRDTPLADWYTAVQGRWEPYLLPVLSDASRIALMWKFGGIYLDTDFIVLKNLRNLTNVLGTQSRYVLNGAFLAFQRRHEFMALCMRDFVDHYNGWIWGHQGPQLLTRVFKKWCSIRSLAESRACRGVTTLPPEAFYPIPWQDWKKYFEDISPEELPRLLNATYAVHVWNKKSQGTRFEATSRALLAQLHARYCPTTHEAMKMYL.

The DXD motif motif lies at D57–D59.

This sequence belongs to the glycosyltransferase 32 family.

The protein localises to the golgi apparatus membrane. It catalyses the reaction a beta-D-Gal-(1-&gt;4)-beta-D-Glc-(1&lt;-&gt;1)-Cer(d18:1(4E)) + UDP-alpha-D-galactose = a globoside Gb3Cer (d18:1(4E)) + UDP + H(+). The enzyme catalyses a beta-D-Gal-(1&lt;-&gt;1')-ceramide + UDP-alpha-D-galactose = alpha-D-Gal-(1-&gt;4)-beta-D-Gal-(1&lt;-&gt;1')-Cer + UDP + H(+). It participates in glycolipid biosynthesis. Functionally, catalyzes the transfer of galactose from UDP-alpha-D-galactose to lactosylceramide/beta-D-galactosyl-(1-&gt;4)-beta-D-glucosyl-(1&lt;-&gt;1)-ceramide(d18:1(4E)) to produce globotriaosylceramide/globoside Gb3Cer (d18:1(4E)). Also able to transfer galactose to galactosylceramide/beta-D-Gal-(1&lt;-&gt;1')-Cer. Globoside Gb3Cer is a glycosphingolipid of the globo serie, one of the major types of neutral root structures of glycosphingolipids, that constitute a significant portion of mammalian cell membranes. The protein is Lactosylceramide 4-alpha-galactosyltransferase (A4GALT) of Pongo pygmaeus (Bornean orangutan).